The chain runs to 339 residues: MIEKNWQELIRPMKPEIEPGHDPARQAKIVAEPLERGFGMTLGNALRRVLLSSLQGAAVTNVHIDGVVHEFSSIDGVREDVTDIVLNIKQIALRMHGEGPKRVVLKKSGPGIVTAGDIEETADVEIVNKDLALCTLDEGAEIRMEFTINTGKGYVPSERNRPEDAPIGLIGVDALYSPVKRVSYKVENTREGQVLDYDKLTLEVETDGTVTPEDSVAFAARILQDQFQIFINFEEAVEARPAEDDKPELDFNPALLRKVDELELSVRSANCLKNDNIVYIGDLIQKSEAEMLRTPNFGRKSLNEIKEVLAQMGLHLGMEAPNWPPENIEDLAKRFEDHV.

Residues 1 to 234 (MIEKNWQELI…DQFQIFINFE (234 aa)) are alpha N-terminal domain (alpha-NTD). An alpha C-terminal domain (alpha-CTD) region spans residues 251–339 (FNPALLRKVD…DLAKRFEDHV (89 aa)).

This sequence belongs to the RNA polymerase alpha chain family. Homodimer. The RNAP catalytic core consists of 2 alpha, 1 beta, 1 beta' and 1 omega subunit. When a sigma factor is associated with the core the holoenzyme is formed, which can initiate transcription.

The enzyme catalyses RNA(n) + a ribonucleoside 5'-triphosphate = RNA(n+1) + diphosphate. Functionally, DNA-dependent RNA polymerase catalyzes the transcription of DNA into RNA using the four ribonucleoside triphosphates as substrates. The protein is DNA-directed RNA polymerase subunit alpha of Maricaulis maris (strain MCS10) (Caulobacter maris).